The sequence spans 352 residues: Biotin synthase (352 aa).

The 219-residue stretch at 44-262 (NRVQVSTLLS…LAVARILMPQ (219 aa)) folds into the Radical SAM core domain. The [4Fe-4S] cluster site is built by C59, C63, and C66. Residues C103, C134, C194, and R266 each coordinate [2Fe-2S] cluster.

It belongs to the radical SAM superfamily. Biotin synthase family. As to quaternary structure, homodimer. The cofactor is [4Fe-4S] cluster. It depends on [2Fe-2S] cluster as a cofactor.

The enzyme catalyses (4R,5S)-dethiobiotin + (sulfur carrier)-SH + 2 reduced [2Fe-2S]-[ferredoxin] + 2 S-adenosyl-L-methionine = (sulfur carrier)-H + biotin + 2 5'-deoxyadenosine + 2 L-methionine + 2 oxidized [2Fe-2S]-[ferredoxin]. It functions in the pathway cofactor biosynthesis; biotin biosynthesis; biotin from 7,8-diaminononanoate: step 2/2. Functionally, catalyzes the conversion of dethiobiotin (DTB) to biotin by the insertion of a sulfur atom into dethiobiotin via a radical-based mechanism. This Pseudomonas syringae pv. tomato (strain ATCC BAA-871 / DC3000) protein is Biotin synthase.